A 385-amino-acid polypeptide reads, in one-letter code: Chaperone protein DnaJ (385 aa).

A J domain is found at 5-70; the sequence is DYYEVLGVAK…QKRAAYDRYG (66 aa). A CR-type zinc finger spans residues 145–223; the sequence is GFDTEIRVPS…CDGVGRTRRN (79 aa). Zn(2+)-binding residues include C158, C161, C175, C178, C197, C200, C211, and C214. 4 CXXCXGXG motif repeats span residues 158 to 165, 175 to 182, 197 to 204, and 211 to 218; these read CDTCHGSG, CRTCGGSG, CPTCHGTG, and CPSCDGVG.

This sequence belongs to the DnaJ family. Homodimer. Requires Zn(2+) as cofactor.

The protein resides in the cytoplasm. Participates actively in the response to hyperosmotic and heat shock by preventing the aggregation of stress-denatured proteins and by disaggregating proteins, also in an autonomous, DnaK-independent fashion. Unfolded proteins bind initially to DnaJ; upon interaction with the DnaJ-bound protein, DnaK hydrolyzes its bound ATP, resulting in the formation of a stable complex. GrpE releases ADP from DnaK; ATP binding to DnaK triggers the release of the substrate protein, thus completing the reaction cycle. Several rounds of ATP-dependent interactions between DnaJ, DnaK and GrpE are required for fully efficient folding. Also involved, together with DnaK and GrpE, in the DNA replication of plasmids through activation of initiation proteins. The polypeptide is Chaperone protein DnaJ (Bordetella pertussis (strain Tohama I / ATCC BAA-589 / NCTC 13251)).